The primary structure comprises 436 residues: 3-ketoacyl-CoA thiolase (436 aa).

The active-site Acyl-thioester intermediate is Cys99. Catalysis depends on proton acceptor residues His392 and Cys422.

The protein belongs to the thiolase-like superfamily. Thiolase family. In terms of assembly, heterotetramer of two alpha chains (FadJ) and two beta chains (FadI).

It is found in the cytoplasm. The enzyme catalyses an acyl-CoA + acetyl-CoA = a 3-oxoacyl-CoA + CoA. It participates in lipid metabolism; fatty acid beta-oxidation. In terms of biological role, catalyzes the final step of fatty acid oxidation in which acetyl-CoA is released and the CoA ester of a fatty acid two carbons shorter is formed. The polypeptide is 3-ketoacyl-CoA thiolase (Escherichia coli O81 (strain ED1a)).